Consider the following 99-residue polypeptide: Acylphosphatase (99 aa).

One can recognise an Acylphosphatase-like domain in the interval 5-97; the sequence is VRQIVIRGRV…RPGERFSQLP (93 aa). Residues Arg20 and Asn38 contribute to the active site.

It belongs to the acylphosphatase family.

The catalysed reaction is an acyl phosphate + H2O = a carboxylate + phosphate + H(+). This is Acylphosphatase (acyP) from Nitrobacter hamburgensis (strain DSM 10229 / NCIMB 13809 / X14).